A 548-amino-acid polypeptide reads, in one-letter code: Aspergilol synthase AuAP450 (548 aa).

The helical transmembrane segment at 38–58 (PQLVITTLGALLLAAFYLLPS) threads the bilayer. C489 is a heme binding site.

This sequence belongs to the cytochrome P450 family. It depends on heme as a cofactor.

It localises to the membrane. The protein operates within secondary metabolite biosynthesis; terpenoid biosynthesis. Its function is as follows. Cytochrome P450 monooxygenase; part of the gene cluster that mediates the biosynthesis of aspergiltriene A, aspergildienes A-D and aspergilols A-D. The bifunctional terpene synthase AuAS converts DMAPP and IPP into sesterterpenes. The C-terminal prenyltransferase (PT) domain of AuAS catalyzes formation of GFPP, whereas the N-terminal terpene cyclase (TC) domain catalyzes the cyclization of GFPP into 5 distinct sesterterpenes: aspergiltriene A, aspergildiene A, aspergildiene B, aspergildiene C and aspergildiene D. The cytochrome P450 monooxygenase AP450 then hydroxylates the aspergildienes A, B, C and D to yield the corresponding sesterterpene alcohols, aspergilols A-D. This Aspergillus ustus protein is Aspergilol synthase AuAP450.